Reading from the N-terminus, the 319-residue chain is Acetyl-coenzyme A carboxylase carboxyl transferase subunit alpha (319 aa).

A CoA carboxyltransferase C-terminal domain is found at 35–292 (EISKLMRRLV…KKTIAEALAE (258 aa)).

Belongs to the AccA family. Acetyl-CoA carboxylase is a heterohexamer composed of biotin carboxyl carrier protein (AccB), biotin carboxylase (AccC) and two subunits each of ACCase subunit alpha (AccA) and ACCase subunit beta (AccD).

Its subcellular location is the cytoplasm. The catalysed reaction is N(6)-carboxybiotinyl-L-lysyl-[protein] + acetyl-CoA = N(6)-biotinyl-L-lysyl-[protein] + malonyl-CoA. The protein operates within lipid metabolism; malonyl-CoA biosynthesis; malonyl-CoA from acetyl-CoA: step 1/1. Functionally, component of the acetyl coenzyme A carboxylase (ACC) complex. First, biotin carboxylase catalyzes the carboxylation of biotin on its carrier protein (BCCP) and then the CO(2) group is transferred by the carboxyltransferase to acetyl-CoA to form malonyl-CoA. In Desulfitobacterium hafniense (strain DSM 10664 / DCB-2), this protein is Acetyl-coenzyme A carboxylase carboxyl transferase subunit alpha.